The following is a 293-amino-acid chain: Ribosomal RNA small subunit methyltransferase A (293 aa).

Residues Asn-29, Leu-31, Gly-56, Glu-77, Asp-102, and Asn-127 each coordinate S-adenosyl-L-methionine.

The protein belongs to the class I-like SAM-binding methyltransferase superfamily. rRNA adenine N(6)-methyltransferase family. RsmA subfamily.

The protein localises to the cytoplasm. It catalyses the reaction adenosine(1518)/adenosine(1519) in 16S rRNA + 4 S-adenosyl-L-methionine = N(6)-dimethyladenosine(1518)/N(6)-dimethyladenosine(1519) in 16S rRNA + 4 S-adenosyl-L-homocysteine + 4 H(+). Specifically dimethylates two adjacent adenosines (A1518 and A1519) in the loop of a conserved hairpin near the 3'-end of 16S rRNA in the 30S particle. May play a critical role in biogenesis of 30S subunits. The chain is Ribosomal RNA small subunit methyltransferase A from Geobacillus kaustophilus (strain HTA426).